Reading from the N-terminus, the 205-residue chain is Large ribosomal subunit protein uL13 (205 aa).

It belongs to the universal ribosomal protein uL13 family.

The sequence is that of Large ribosomal subunit protein uL13 (RpL13A) from Drosophila melanogaster (Fruit fly).